The sequence spans 863 residues: Chloride channel protein A (863 aa).

At 1–124 (MFRNNNNDNN…TSKLNHMLKT (124 aa)) the chain is on the cytoplasmic side. A disordered region spans residues 48-78 (ENGLINNNNNSHNNNNGGNNNNHGPSKVTHR). Positions 49-71 (NGLINNNNNSHNNNNGGNNNNHG) are enriched in low complexity. Transmembrane regions (helical) follow at residues 125–145 (FGKW…AYLV), 171–191 (IAFL…SLVI), 228–248 (LVSL…GPMI), 289–309 (GAAA…LFGF), 324–344 (TFFA…GFDM), 367–387 (LIPF…FVNL), and 408–428 (VLEV…CAAF). The disordered stretch occupies residues 434 to 460 (KTQANGSQTNSLDTSSSSILSSSGDNS). Positions 439–460 (GSQTNSLDTSSSSILSSSGDNS) are enriched in low complexity. 3 helical membrane-spanning segments follow: residues 518–538 (IFTI…TTIT), 539–559 (SGLM…ATFG), and 561–581 (LVGQ…ALVG). CBS domains lie at 661 to 742 (MKTE…CHEQ) and 816 to 863 (MNLS…KDLL).

Belongs to the chloride channel (TC 2.A.49) family.

The protein resides in the membrane. Its function is as follows. Voltage-gated chloride channel. Chloride channels may have several functions including the regulation of cell volume, membrane potential stabilization and signal transduction. The protein is Chloride channel protein A (clcA) of Dictyostelium discoideum (Social amoeba).